The primary structure comprises 201 residues: MKILYFIFVIIINILLILNHVKSKYNTFIFENTDGFPECNREVPIDKCTLFCGRLFGGLSYDSEKLIFYEGENCYTMIHGEFLCSDTERTSFRMDNYLADDESWYKAFFNYLVNCTWDEKNTPETPSPTENAPNTSGGSSEGNHYTYKSSSSSSEHINDIPTYSHSGYGNYGEDPQRNIGISLSSSLIFISILFLIIFINN.

The first 23 residues, 1–23, serve as a signal peptide directing secretion; that stretch reads MKILYFIFVIIINILLILNHVKS. Over 24–178 the chain is Extracellular; sequence KYNTFIFENT…GNYGEDPQRN (155 aa). 2 N-linked (GlcNAc...) asparagine glycosylation sites follow: Asn114 and Asn134. The interval 122–157 is disordered; it reads TPETPSPTENAPNTSGGSSEGNHYTYKSSSSSSEHI. Residues 123 to 148 are compositionally biased toward polar residues; the sequence is PETPSPTENAPNTSGGSSEGNHYTYK. A helical membrane pass occupies residues 179–199; the sequence is IGISLSSSLIFISILFLIIFI. Residues 200-201 are Cytoplasmic-facing; it reads NN.

It localises to the membrane. This is an uncharacterized protein from Dictyostelium discoideum (Social amoeba).